We begin with the raw amino-acid sequence, 492 residues long: Probable cytosol aminopeptidase (492 aa).

Residues Lys259 and Asp264 each contribute to the Mn(2+) site. Lys271 is an active-site residue. The Mn(2+) site is built by Asp283, Asp342, and Glu344. Arg346 is a catalytic residue.

Belongs to the peptidase M17 family. The cofactor is Mn(2+).

The protein resides in the cytoplasm. It catalyses the reaction Release of an N-terminal amino acid, Xaa-|-Yaa-, in which Xaa is preferably Leu, but may be other amino acids including Pro although not Arg or Lys, and Yaa may be Pro. Amino acid amides and methyl esters are also readily hydrolyzed, but rates on arylamides are exceedingly low.. The catalysed reaction is Release of an N-terminal amino acid, preferentially leucine, but not glutamic or aspartic acids.. Its function is as follows. Presumably involved in the processing and regular turnover of intracellular proteins. Catalyzes the removal of unsubstituted N-terminal amino acids from various peptides. The polypeptide is Probable cytosol aminopeptidase (pepA) (Synechocystis sp. (strain ATCC 27184 / PCC 6803 / Kazusa)).